The following is a 1148-amino-acid chain: Putative ATP-dependent RNA helicase rha-2 (1148 aa).

Positions 1–10 (MGKRKTKEDN) are enriched in basic and acidic residues. Disordered stretches follow at residues 1–51 (MGKR…FAKE) and 101–163 (STKL…DAGN). The segment covering 138–160 (PTDDESSSEEEEEEEEGDNDIED) has biased composition (acidic residues). The region spanning 246–412 (VEAINENLVT…KLFPLLTPKV (167 aa)) is the Helicase ATP-binding domain. 259–266 (GETGSGKT) contacts ATP. The DEAH box signature appears at 355–358 (DEAH). Residues 463–703 (EVKQLITKLK…QLVLHLKSMN (241 aa)) form the Helicase C-terminal domain.

Belongs to the DEAD box helicase family. DEAH subfamily.

It carries out the reaction ATP + H2O = ADP + phosphate + H(+). Probable ATP-binding RNA helicase. This Caenorhabditis elegans protein is Putative ATP-dependent RNA helicase rha-2 (rha-2).